Reading from the N-terminus, the 368-residue chain is Phosphate acyltransferase (368 aa).

Positions 338 to 368 (GDGGHDAGGAGTASPAPGHHAEPSAAQSSKA) are disordered.

This sequence belongs to the PlsX family. As to quaternary structure, homodimer. Probably interacts with PlsY.

Its subcellular location is the cytoplasm. It carries out the reaction a fatty acyl-[ACP] + phosphate = an acyl phosphate + holo-[ACP]. Its pathway is lipid metabolism; phospholipid metabolism. In terms of biological role, catalyzes the reversible formation of acyl-phosphate (acyl-PO(4)) from acyl-[acyl-carrier-protein] (acyl-ACP). This enzyme utilizes acyl-ACP as fatty acyl donor, but not acyl-CoA. In Burkholderia ambifaria (strain MC40-6), this protein is Phosphate acyltransferase.